The chain runs to 480 residues: MNYLNETIDSLNDKLKSGAVSADQLVKDTIANIKKTDEKINAFITVDEDAKPAEDLDFNNKLAGVPIAIKDNIITNGLKTTAASHILYNFEPVYESTVVAKLKAAQATIIGKTNMDEFAMGSSTETSYFGDTKNPWNLNKVPGGSSGGSAAAVASGEVVAALGSDTGGSIRQPASFNGIFGIKPTYGRVSRWGLIAFASSLDQIGVMSKRVKDSAEVLNVIAGADDRDATVSEKEVPDYTSFLGKDVKGLRVAVPKEYMSDAVEEGVRKEVEAQIELLRANGAIINEVSLPHTKYVVPTYYIIASSEASANLERYDGIRYGYRAEAKNLDEVFLKSRSEGFGDEVKRRIMLGSFALSAGAYDKFFLQAAKVRTLICQDFDKIFEDNDVIVGPVSTETAFDLNSEISDQIKMYNNDILTISANMAGIPAASVPAGLSETTGMPVGFQIMAKRFDEGHVFQVADFIERSNKFYEQTPAGLED.

Residues lysine 70 and serine 145 each act as charge relay system in the active site. The active-site Acyl-ester intermediate is serine 169.

Belongs to the amidase family. GatA subfamily. As to quaternary structure, heterotrimer of A, B and C subunits.

It carries out the reaction L-glutamyl-tRNA(Gln) + L-glutamine + ATP + H2O = L-glutaminyl-tRNA(Gln) + L-glutamate + ADP + phosphate + H(+). Allows the formation of correctly charged Gln-tRNA(Gln) through the transamidation of misacylated Glu-tRNA(Gln) in organisms which lack glutaminyl-tRNA synthetase. The reaction takes place in the presence of glutamine and ATP through an activated gamma-phospho-Glu-tRNA(Gln). The polypeptide is Glutamyl-tRNA(Gln) amidotransferase subunit A (Lactobacillus delbrueckii subsp. bulgaricus (strain ATCC 11842 / DSM 20081 / BCRC 10696 / JCM 1002 / NBRC 13953 / NCIMB 11778 / NCTC 12712 / WDCM 00102 / Lb 14)).